Reading from the N-terminus, the 337-residue chain is tRNA N6-adenosine threonylcarbamoyltransferase (337 aa).

Residues H114 and H118 each contribute to the Fe cation site. Residues 136–140 (LVSGG), D169, G182, D186, and N275 contribute to the substrate site. A Fe cation-binding site is contributed by D301.

Belongs to the KAE1 / TsaD family. It depends on Fe(2+) as a cofactor.

The protein resides in the cytoplasm. The enzyme catalyses L-threonylcarbamoyladenylate + adenosine(37) in tRNA = N(6)-L-threonylcarbamoyladenosine(37) in tRNA + AMP + H(+). Required for the formation of a threonylcarbamoyl group on adenosine at position 37 (t(6)A37) in tRNAs that read codons beginning with adenine. Is involved in the transfer of the threonylcarbamoyl moiety of threonylcarbamoyl-AMP (TC-AMP) to the N6 group of A37, together with TsaE and TsaB. TsaD likely plays a direct catalytic role in this reaction. This chain is tRNA N6-adenosine threonylcarbamoyltransferase, found in Streptococcus thermophilus (strain ATCC BAA-491 / LMD-9).